The chain runs to 192 residues: Adenylate kinase (192 aa).

10-18 (GVPGVGGTT) contacts ATP.

This sequence belongs to the archaeal adenylate kinase family. As to quaternary structure, monomer.

Its subcellular location is the cytoplasm. The enzyme catalyses AMP + ATP = 2 ADP. This is Adenylate kinase from Methanococcus maripaludis (strain C6 / ATCC BAA-1332).